A 66-amino-acid chain; its full sequence is Large ribosomal subunit protein uL29 (66 aa).

The protein belongs to the universal ribosomal protein uL29 family.

This is Large ribosomal subunit protein uL29 from Helicobacter pylori (strain HPAG1).